A 1004-amino-acid chain; its full sequence is Phyllocladan-16-alpha-ol synthase (1004 aa).

Positions 321-324 match the DXDD motif motif; it reads DADD. Mg(2+)-binding residues include aspartate 667, glutamate 671, asparagine 872, aspartate 873, serine 876, and aspartate 880. The short motif at 667–671 is the DEXXE motif element; it reads DEFME.

Belongs to the terpene synthase family. Mg(2+) is required as a cofactor.

It carries out the reaction (2E,6E,10E)-geranylgeranyl diphosphate = (+)-copalyl diphosphate. The enzyme catalyses (+)-copalyl diphosphate + H2O = phyllocladan-16alpha-ol + diphosphate. Its function is as follows. Involved in the synthesis of labdane-related hydrocarbons by catalyzing the conversion of geranylgeranyl diphosphate (GGDP) to phyllocladan-16-alpha-ol in a two step via type B cyclization into a (+)-copalyl diphosphate ((+)-CDP) intermediate. The sequence is that of Phyllocladan-16-alpha-ol synthase (PaDC1) from Phomopsis amygdali (Fusicoccum amygdali).